The sequence spans 242 residues: Polycomb group RING finger protein 3 (242 aa).

The RING-type zinc finger occupies 17–56 (CRLCSGYLIDATTVTECLHTFCRSCLVKYLEENNTCPTCR). Residues 115 to 149 (AKQHLDPHRNGETKADDSSNKEAAEEKQEEDGDYH) are disordered. The span at 117–140 (QHLDPHRNGETKADDSSNKEAAEE) shows a compositional bias: basic and acidic residues. The segment at 132-242 (SSNKEAAEEK…LHYRPKMDLL (111 aa)) is interaction with BCORL1.

As to quaternary structure, component of a PRC1-like complex that contains PCGF3, RNF2 and RYBP. Interacts with CBX6, CBX7 and CBX8. Interacts with BCORL1.

The protein localises to the nucleus. Its subcellular location is the nucleoplasm. In terms of biological role, component of a Polycomb group (PcG) multiprotein PRC1-like complex, a complex class required to maintain the transcriptionally repressive state of many genes, including Hox genes, throughout development. PcG PRC1 complex acts via chromatin remodeling and modification of histones; it mediates monoubiquitination of histone H2A 'Lys-119', rendering chromatin heritably changed in its expressibility. Within the PRC1-like complex, regulates RNF2 ubiquitin ligase activity. Plays a redundant role with PCGF5 as part of a PRC1-like complex that mediates monoubiquitination of histone H2A 'Lys-119' on the X chromosome and is required for normal silencing of one copy of the X chromosome in XX females. This Bos taurus (Bovine) protein is Polycomb group RING finger protein 3 (PCGF3).